We begin with the raw amino-acid sequence, 513 residues long: ATP synthase subunit alpha (513 aa).

169 to 176 contacts ATP; the sequence is GDRQTGKS.

It belongs to the ATPase alpha/beta chains family. As to quaternary structure, F-type ATPases have 2 components, CF(1) - the catalytic core - and CF(0) - the membrane proton channel. CF(1) has five subunits: alpha(3), beta(3), gamma(1), delta(1), epsilon(1). CF(0) has three main subunits: a(1), b(2) and c(9-12). The alpha and beta chains form an alternating ring which encloses part of the gamma chain. CF(1) is attached to CF(0) by a central stalk formed by the gamma and epsilon chains, while a peripheral stalk is formed by the delta and b chains.

It localises to the cell inner membrane. It catalyses the reaction ATP + H2O + 4 H(+)(in) = ADP + phosphate + 5 H(+)(out). In terms of biological role, produces ATP from ADP in the presence of a proton gradient across the membrane. The alpha chain is a regulatory subunit. The sequence is that of ATP synthase subunit alpha from Sodalis glossinidius (strain morsitans).